A 675-amino-acid polypeptide reads, in one-letter code: Pescadillo homolog (675 aa).

The segment at 309–331 (AGLDEAKEEPAAETTEESSETID) is disordered. Residues 352–471 (EAGSLFAPFT…RLVRPDLYAP (120 aa)) form the BRCT domain. Residues 475 to 675 (LPPHLSPWVK…RRKLEKGAAK (201 aa)) form a disordered region. Residues 498–518 (EQEEEGEAELDEDSDEEMEEA) are compositionally biased toward acidic residues. Over residues 519–530 (TSDKKAEAKADV) the composition is skewed to basic and acidic residues. 2 stretches are compositionally biased toward acidic residues: residues 532 to 541 (SESEDEDESV) and 549 to 580 (GTDD…DEEE). The stretch at 551 to 675 (DDDESESEDE…RRKLEKGAAK (125 aa)) forms a coiled coil. Positions 581–591 (AARTQHQKELE) are enriched in basic and acidic residues. Over residues 611–623 (KKASQAKKIAAKK) the composition is skewed to basic residues. Over residues 624–634 (RKEEEELERQK) the composition is skewed to basic and acidic residues.

It belongs to the pescadillo family. In terms of assembly, component of the NOP7 complex, composed of erb1, nop7 and ytm1. The complex is held together by erb1, which interacts with nop7 via its N-terminal domain and with ytm1 via a high-affinity interaction between the seven-bladed beta-propeller domains of the 2 proteins. The NOP7 complex associates with the 66S pre-ribosome.

The protein resides in the nucleus. It localises to the nucleolus. Its subcellular location is the nucleoplasm. In terms of biological role, component of the NOP7 complex, which is required for maturation of the 25S and 5.8S ribosomal RNAs and formation of the 60S ribosome. This chain is Pescadillo homolog (nop7), found in Aspergillus fumigatus (strain CBS 144.89 / FGSC A1163 / CEA10) (Neosartorya fumigata).